We begin with the raw amino-acid sequence, 92 residues long: MATTYEEFAAKLDRLDAEFAKKMEEQNKRFFADKPDEATLSPEMKEHYEKFEKMIQEHTDKFNKKMREHSEHFKAKFAELLEQQKNAQFPGK.

This sequence belongs to the KMP-11 family. As to quaternary structure, monomer.

It is found in the cytoplasm. The protein resides in the cytoskeleton. Functionally, may be involved in the regulation of the cytoskeleton through interaction with the subpellicular microtubules. May be involved in parasite mobility and attachment to the surface of the host cell. Behaves as a strong immunogen during infection. This is Kinetoplastid membrane protein 11 (KMP-11/1) from Trypanosoma brucei brucei.